The chain runs to 140 residues: Nucleoside diphosphate kinase (140 aa).

ATP contacts are provided by K11, F59, R87, T93, R104, and N114. H117 functions as the Pros-phosphohistidine intermediate in the catalytic mechanism.

The protein belongs to the NDK family. Homotetramer. It depends on Mg(2+) as a cofactor.

It is found in the cytoplasm. The enzyme catalyses a 2'-deoxyribonucleoside 5'-diphosphate + ATP = a 2'-deoxyribonucleoside 5'-triphosphate + ADP. It carries out the reaction a ribonucleoside 5'-diphosphate + ATP = a ribonucleoside 5'-triphosphate + ADP. Functionally, major role in the synthesis of nucleoside triphosphates other than ATP. The ATP gamma phosphate is transferred to the NDP beta phosphate via a ping-pong mechanism, using a phosphorylated active-site intermediate. This chain is Nucleoside diphosphate kinase, found in Rickettsia peacockii (strain Rustic).